A 434-amino-acid chain; its full sequence is CCA tRNA nucleotidyltransferase 1, mitochondrial (434 aa).

Residues 1–41 constitute a mitochondrion transit peptide; the sequence is MLRCLYHWHRPVLNRRWSRLCLPKQYLFTMKLQSPEFQSLF. Residues Gly64 and Arg67 each contribute to the ATP site. CTP contacts are provided by Gly64 and Arg67. The Mg(2+) site is built by Asp77 and Asp79. ATP-binding residues include Arg151, Asp194, Arg197, Arg200, and Arg203. Residues Arg151, Asp194, Arg197, Arg200, and Arg203 each contribute to the CTP site. Phosphoserine is present on Ser400. An N6-acetyllysine modification is found at Lys402.

This sequence belongs to the tRNA nucleotidyltransferase/poly(A) polymerase family. As to quaternary structure, monomer, and homodimer; disulfide-linked. The cofactor is Mg(2+).

It localises to the mitochondrion. It is found in the cytoplasm. The protein resides in the nucleus. It carries out the reaction a tRNA precursor + 2 CTP + ATP = a tRNA with a 3' CCA end + 3 diphosphate. The catalysed reaction is a tRNA with a 3' CCA end + 2 CTP + ATP = a tRNA with a 3' CCACCA end + 3 diphosphate. Functionally, nucleotidyltransferase that catalyzes the addition and repair of the essential 3'-terminal CCA sequence in tRNAs, which is necessary for the attachment of amino acids to the 3' terminus of tRNA molecules, using CTP and ATP as substrates. tRNA 3'-terminal CCA addition is required both for tRNA processing and repair. Promotes tRNA repair and recycling downstream of the ribosome-associated quality control (RQC) pathway by mediating addition of the tRNA 3'-terminal CCA following cleavage by ANKZF1 and repair by ELAC1. Also involved in tRNA surveillance by mediating tandem CCA addition to generate a CCACCA at the 3' terminus of unstable tRNAs and tRNA-like transcripts. While stable tRNAs receive only 3'-terminal CCA, unstable tRNAs beginning with GG are marked with CCACCA and rapidly degraded. The structural flexibility of RNA controls the choice between CCA versus CCACCA addition: following the first CCA addition cycle, nucleotide-binding to the active site triggers a clockwise screw motion, producing torque on the RNA. This ejects stable RNAs, whereas unstable RNAs are refolded while bound to the enzyme and subjected to a second CCA catalytic cycle. Its function is as follows. Adds 2 C residues (CC-) to the 3' terminus of tRNA molecules instead of a complete CCA end as isoform 1 does (in vitro). This is CCA tRNA nucleotidyltransferase 1, mitochondrial from Homo sapiens (Human).